The sequence spans 956 residues: F-box only protein 10 (956 aa).

An F-box domain is found at 1-48 (MEAGGLPLELWRMILAYLHLPDLGRCSLVCRAWYELILSLDSTRWRQL). PbH1 repeat units lie at residues 198–217 (SGHVQFDNCNFENGHIQVHG) and 238–260 (VPLCVLENCEFVGSENNSVTVEG). The interval 314-367 (EGSQSPTSPASSSPKPGSKAGSQEAEVGSDGERVAQTPDSSDGGLSPSGEDEDE) is disordered. Composition is skewed to low complexity over residues 316–336 (SQSPTSPASSSPKPGSKAGSQ) and 351–361 (PDSSDGGLSPS). 2 positions are modified to phosphoserine: S321 and S326. PbH1 repeat units lie at residues 427-448 (VQGCLIRKCLFRDGKGGVFVCS), 449-470 (HGRAKMEGNIFRNLTYAVRCIH), 471-493 (NSKIIMLRNDIYRCRASGIFLRL), 494-516 (EGGGLIAGNNIYHNAEAGVDIRK), 538-560 (LGNGKGIIRNNQIFSNKEAGIYI), 561-583 (LYHGNPVVSGNHIFKGRAAGIAV), 584-606 (NENGKGLITENVIRENQWGGVDI), 607-629 (RRGGIPVLRSNLICFGYSDGVVV), 630-652 (GDEGKGLIEGNTIYANKGCGVWM), 653-675 (MSSSLPHVTSNHVSYNGLYGVAV), 717-739 (RPITIALVESNSINHNGASGLYV), 740-762 (QSSEALHVITNVIHANGDRGITV), 764-786 (QSSQPTRVANNSISCNRQSGVKV), 787-809 (EAQCKVELRGNGIYDNRGHGIIT), and 832-854 (LPRSDTKVIKNRIHSFRAYGIAV).

In terms of assembly, component of the SCF(FBXO10) complex consisting of CUL1, SKP1 and FBXO10. Interacts with BCL2. Interacts with PRDM1.

Its subcellular location is the cytoplasm. Its pathway is protein modification; protein ubiquitination. In terms of biological role, substrate-recognition component of the SCF (SKP1-CUL1-F-box protein)-type E3 ubiquitin ligase complex. Mediates the ubiquitination and degradation of BCL2, an antiapoptotic protein, thereby playing a role in apoptosis by controlling the stability of BCL2. Targets also the receptor for advanced glycation end products RAGE for ubiquitination and subsequent lysosomal degradation. Directly controls HGAL/GCSAM ubiquitination and degradation and thereby decreases BCR signaling. In Homo sapiens (Human), this protein is F-box only protein 10 (FBXO10).